A 150-amino-acid polypeptide reads, in one-letter code: 3-dehydroquinate dehydratase (150 aa).

The active-site Proton acceptor is the Tyr-26. 3 residues coordinate substrate: Asn-77, His-83, and Asp-90. His-103 functions as the Proton donor in the catalytic mechanism. Substrate contacts are provided by residues 104–105 and Arg-114; that span reads LS.

This sequence belongs to the type-II 3-dehydroquinase family. Homododecamer.

The enzyme catalyses 3-dehydroquinate = 3-dehydroshikimate + H2O. The protein operates within metabolic intermediate biosynthesis; chorismate biosynthesis; chorismate from D-erythrose 4-phosphate and phosphoenolpyruvate: step 3/7. Functionally, catalyzes a trans-dehydration via an enolate intermediate. This Yersinia pseudotuberculosis serotype O:1b (strain IP 31758) protein is 3-dehydroquinate dehydratase.